The sequence spans 391 residues: 3-ketoacyl-CoA thiolase (391 aa).

C95 acts as the Acyl-thioester intermediate in catalysis. Catalysis depends on proton acceptor residues H347 and C377.

Belongs to the thiolase-like superfamily. Thiolase family. Heterotetramer of two alpha chains (FadB) and two beta chains (FadA).

The protein resides in the cytoplasm. The enzyme catalyses an acyl-CoA + acetyl-CoA = a 3-oxoacyl-CoA + CoA. It participates in lipid metabolism; fatty acid beta-oxidation. Its function is as follows. Catalyzes the final step of fatty acid oxidation in which acetyl-CoA is released and the CoA ester of a fatty acid two carbons shorter is formed. This Saccharophagus degradans (strain 2-40 / ATCC 43961 / DSM 17024) protein is 3-ketoacyl-CoA thiolase.